The primary structure comprises 543 residues: Formate--tetrahydrofolate ligase (543 aa).

54–61 (TPAGEGKT) is a binding site for ATP.

It belongs to the formate--tetrahydrofolate ligase family.

It catalyses the reaction (6S)-5,6,7,8-tetrahydrofolate + formate + ATP = (6R)-10-formyltetrahydrofolate + ADP + phosphate. Its pathway is one-carbon metabolism; tetrahydrofolate interconversion. The protein is Formate--tetrahydrofolate ligase of Thermus thermophilus (strain ATCC BAA-163 / DSM 7039 / HB27).